A 69-amino-acid chain; its full sequence is Light-harvesting protein B-1015 beta chain (69 aa).

Residues 2–21 (ADLKPSLTGLTEEEAKEFHG) lie on the Cytoplasmic side of the membrane. Residues histidine 20 and histidine 38 each coordinate a bacteriochlorophyll. A helical transmembrane segment spans residues 22-44 (IFVTSTVLYLATAVIVHYLVWTA). Residues 45–56 (RPWIAPIPKGWV) lie on the Periplasmic side of the membrane. Positions 57-69 (NLEGVQSALSYLV) are excised as a propeptide.

Belongs to the antenna complex beta subunit family. As to quaternary structure, the core complex is formed by different alpha and beta chains, binding bacteriochlorophyll molecules, and arranged most probably in tetrameric structures disposed around the reaction center. The non-pigmented gamma chains may constitute additional components.

The protein localises to the cell inner membrane. Functionally, antenna complexes are light-harvesting systems, which transfer the excitation energy to the reaction centers. The chain is Light-harvesting protein B-1015 beta chain (pufB) from Blastochloris viridis (Rhodopseudomonas viridis).